Consider the following 192-residue polypeptide: Nucleosome assembly protein 1-like 5 (192 aa).

Residues 1-12 are compositionally biased toward polar residues; that stretch reads MADSQNQGSAEP. Positions 1–76 are disordered; that stretch reads MADSQNQGSA…APKPRNDFIE (76 aa). Composition is skewed to low complexity over residues 15-28 and 40-55; these read AAAA…AAAA and GDSD…VVGQ. Residues 86–112 adopt a coiled-coil conformation; it reads VLALKKLQKRCDKIEAKFDKEFQALEK. The segment at 136-192 is disordered; sequence AWTLEGDEEDDDDDEYEDEEEGEEEDEEEEEPAAEAAGTAAAKDEGPHSAVPDDAKK. A compositionally biased stretch (acidic residues) spans 140 to 168; it reads EGDEEDDDDDEYEDEEEGEEEDEEEEEPA. The span at 177–192 shows a compositional bias: basic and acidic residues; that stretch reads AKDEGPHSAVPDDAKK.

The protein belongs to the nucleosome assembly protein (NAP) family.

It localises to the nucleus. This Bos taurus (Bovine) protein is Nucleosome assembly protein 1-like 5 (NAP1L5).